We begin with the raw amino-acid sequence, 386 residues long: Succinate--CoA ligase [ADP-forming] subunit beta (386 aa).

Residues 9-244 form the ATP-grasp domain; sequence KELFANYGVP…LDEEEPLEVE (236 aa). ATP contacts are provided by residues Lys-46, 53–55, Glu-99, Leu-102, and Glu-107; that span reads GRG. Mg(2+) is bound by residues Asn-199 and Asp-213. Substrate-binding positions include Asn-264 and 321 to 323; that span reads GIL.

This sequence belongs to the succinate/malate CoA ligase beta subunit family. Heterotetramer of two alpha and two beta subunits. The cofactor is Mg(2+).

The enzyme catalyses succinate + ATP + CoA = succinyl-CoA + ADP + phosphate. It catalyses the reaction GTP + succinate + CoA = succinyl-CoA + GDP + phosphate. Its pathway is carbohydrate metabolism; tricarboxylic acid cycle; succinate from succinyl-CoA (ligase route): step 1/1. Functionally, succinyl-CoA synthetase functions in the citric acid cycle (TCA), coupling the hydrolysis of succinyl-CoA to the synthesis of either ATP or GTP and thus represents the only step of substrate-level phosphorylation in the TCA. The beta subunit provides nucleotide specificity of the enzyme and binds the substrate succinate, while the binding sites for coenzyme A and phosphate are found in the alpha subunit. This is Succinate--CoA ligase [ADP-forming] subunit beta from Desulfatibacillum aliphaticivorans.